Reading from the N-terminus, the 287-residue chain is NAD-dependent protein deacylase sir-2.3 (287 aa).

One can recognise a Deacetylase sirtuin-type domain in the interval 10 to 287 (TELCENSLKK…YRISDVLKEM (278 aa)). NAD(+) is bound by residues 35-55 (GAGI…VGLY) and 116-119 (QNVD). The Proton acceptor role is filled by histidine 134. Zn(2+)-binding residues include cysteine 142, cysteine 145, cysteine 196, and cysteine 199. Residues 236 to 238 (GTS), 262 to 264 (NIG), and isoleucine 280 contribute to the NAD(+) site.

This sequence belongs to the sirtuin family. Class II subfamily. As to quaternary structure, interacts with pyc-1, pcca-1 and mccc-1. Zn(2+) serves as cofactor. Ubiquitously expressed with high expression in the pharynx, body wall muscles and gonad. Strong expression in a subset of non-neuronal cells in the head.

It localises to the mitochondrion matrix. It is found in the mitochondrion. The catalysed reaction is N(6)-acetyl-L-lysyl-[protein] + NAD(+) + H2O = 2''-O-acetyl-ADP-D-ribose + nicotinamide + L-lysyl-[protein]. NAD-dependent protein deacylase. Catalyzes the NAD-dependent hydrolysis of acyl groups from lysine residues. Plays a role in oxidative stress resistance. Might promote neuronal cell death under ischemic conditions and cell death in touch neurons induced by mec-4 channel hyperactivation, possibly downstream of the insulin-like receptor daf-2. Might attenuate the reactive oxygen species (ROS) scavenging system, that eliminates ROS in ischemic conditions, under dietary deprivation and when glycolysis is blocked. In Caenorhabditis elegans, this protein is NAD-dependent protein deacylase sir-2.3 (sir-2.3).